The chain runs to 339 residues: 2,3,4,5-tetrahydropyridine-2,6-dicarboxylate N-succinyltransferase (339 aa).

Residue Asp-180 participates in Mg(2+) binding. Glu-213 acts as the Acyl-anhydride intermediate in catalysis. Succinyl-CoA contacts are provided by residues Arg-215, Gly-230, Ser-233, Ala-256, 271 to 272 (EA), Gly-279, and Lys-300.

The protein belongs to the type 2 tetrahydrodipicolinate N-succinyltransferase family. As to quaternary structure, homotrimer.

The protein resides in the cytoplasm. It carries out the reaction (S)-2,3,4,5-tetrahydrodipicolinate + succinyl-CoA + H2O = (S)-2-succinylamino-6-oxoheptanedioate + CoA. Its pathway is amino-acid biosynthesis; L-lysine biosynthesis via DAP pathway; LL-2,6-diaminopimelate from (S)-tetrahydrodipicolinate (succinylase route): step 1/3. Its function is as follows. Catalyzes the conversion of the cyclic tetrahydrodipicolinate (THDP) into the acyclic N-succinyl-L-2-amino-6-oxopimelate using succinyl-CoA. This Bifidobacterium longum (strain NCC 2705) protein is 2,3,4,5-tetrahydropyridine-2,6-dicarboxylate N-succinyltransferase.